The primary structure comprises 318 residues: Melanocyte-stimulating hormone receptor (318 aa).

Residues 1-37 (MPMQGAQRKLLGSLNSTPTATSNLGLAANRTGAPCLE) are Extracellular-facing. Asn-29 carries N-linked (GlcNAc...) asparagine glycosylation. A helical membrane pass occupies residues 38 to 63 (LPIPNGLFLSLGLVSLVENVLVVAAI). Over 64-72 (AKNRNLHSS) the chain is Cytoplasmic. The chain crosses the membrane as a helical span at residues 73 to 93 (MYCFICCLALSDLLVSGSNML). Over 94–118 (ETAVILLLEAGVLATRASVVQQLHN) the chain is Extracellular. Residues 119 to 140 (TIDVLTCSSMLCSLCFLGAIAV) traverse the membrane as a helical segment. At 141-163 (DRYISIFYALRYHSIMTLPRAQR) the chain is on the cytoplasmic side. The chain crosses the membrane as a helical span at residues 164–183 (AVAAIWVASVLSSTLFITYY). The Extracellular segment spans residues 184-191 (DHAAVLLC). Residues 192-211 (LMVFFLAMLVLMAVLYVHML) traverse the membrane as a helical segment. Residues 212-240 (ARARQHAQGIIRLHKRQPPAHKGFGLRGA) are Cytoplasmic-facing. Residues 241–266 (ATLTILLGIFFLCWGPFFLCLTLVVF) form a helical membrane-spanning segment. Topologically, residues 267-279 (CPQHLTCNCIFKN) are extracellular. Residues 280-300 (FKVFLTLIICNTIIDPLIYAF) form a helical membrane-spanning segment. Topologically, residues 301–317 (RSQELRRMLKEVLGRGR) are cytoplasmic.

It belongs to the G-protein coupled receptor 1 family. Interacts with MGRN1, but does not undergo MGRN1-mediated ubiquitination; this interaction competes with GNAS-binding and thus inhibits agonist-induced cAMP production. Interacts with OPN3; the interaction results in a decrease in MC1R-mediated cAMP signaling and ultimately a decrease in melanin production in melanocytes.

The protein resides in the cell membrane. Its function is as follows. Receptor for MSH (alpha, beta and gamma) and ACTH. The activity of this receptor is mediated by G proteins which activate adenylate cyclase. Mediates melanogenesis, the production of eumelanin (black/brown) and phaeomelanin (red/yellow), via regulation of cAMP signaling in melanocytes. The polypeptide is Melanocyte-stimulating hormone receptor (MC1R) (Leontopithecus rosalia (Golden lion tamarin)).